Here is an 892-residue protein sequence, read N- to C-terminus: Protein RRP6-like 3 (892 aa).

Positions 119 to 287 (YVWVETESQL…IADSLTTELK (169 aa)) constitute a 3'-5' exonuclease domain. Positions 350–436 (SLNAEELVRK…CSHLDDIYKM (87 aa)) constitute an HRDC domain. A disordered region spans residues 785-811 (VDDSGDGTSEGDGAKELNDTQCNGNTL).

Its subcellular location is the cytoplasm. It is found in the cytosol. In Arabidopsis thaliana (Mouse-ear cress), this protein is Protein RRP6-like 3.